A 402-amino-acid chain; its full sequence is Argininosuccinate synthase (402 aa).

Residue 9 to 17 (AYSGGLDTS) participates in ATP binding. Position 86 (tyrosine 86) interacts with L-citrulline. Glycine 116 lines the ATP pocket. Positions 118, 122, and 123 each coordinate L-aspartate. Residue asparagine 122 participates in L-citrulline binding. Residues arginine 126, serine 174, serine 183, glutamate 259, and tyrosine 271 each contribute to the L-citrulline site.

The protein belongs to the argininosuccinate synthase family. Type 1 subfamily. As to quaternary structure, homotetramer.

The protein localises to the cytoplasm. It catalyses the reaction L-citrulline + L-aspartate + ATP = 2-(N(omega)-L-arginino)succinate + AMP + diphosphate + H(+). Its pathway is amino-acid biosynthesis; L-arginine biosynthesis; L-arginine from L-ornithine and carbamoyl phosphate: step 2/3. This is Argininosuccinate synthase from Anoxybacillus flavithermus (strain DSM 21510 / WK1).